A 458-amino-acid chain; its full sequence is Probable alpha-L-glutamate ligase (458 aa).

Residues 1–162 (MSDNKFIIGS…YGVKSAKKSG (162 aa)) form a unknown region. The segment at 163–458 (LKIGLLASNP…IEKKLGWKAE (296 aa)) is alpha-L-glutamate ligase. Residues 267-450 (LQLLQKNNLD…IAGAMIDSIE (184 aa)) form the ATP-grasp domain. Residues lysine 304, 341 to 342 (EF), aspartate 350, and 374 to 376 (RAN) contribute to the ATP site. Mg(2+)-binding residues include aspartate 411, glutamate 423, and asparagine 425. Residues aspartate 411, glutamate 423, and asparagine 425 each contribute to the Mn(2+) site.

It in the C-terminal section; belongs to the RimK family. Mg(2+) is required as a cofactor. It depends on Mn(2+) as a cofactor.

The chain is Probable alpha-L-glutamate ligase from Shewanella halifaxensis (strain HAW-EB4).